The sequence spans 439 residues: Methylenetetrahydrofolate--tRNA-(uracil-5-)-methyltransferase TrmFO (439 aa).

FAD is bound at residue 7-12; sequence GAGLAG.

Belongs to the MnmG family. TrmFO subfamily. The cofactor is FAD.

It is found in the cytoplasm. It carries out the reaction uridine(54) in tRNA + (6R)-5,10-methylene-5,6,7,8-tetrahydrofolate + NADH + H(+) = 5-methyluridine(54) in tRNA + (6S)-5,6,7,8-tetrahydrofolate + NAD(+). The enzyme catalyses uridine(54) in tRNA + (6R)-5,10-methylene-5,6,7,8-tetrahydrofolate + NADPH + H(+) = 5-methyluridine(54) in tRNA + (6S)-5,6,7,8-tetrahydrofolate + NADP(+). Functionally, catalyzes the folate-dependent formation of 5-methyl-uridine at position 54 (M-5-U54) in all tRNAs. The protein is Methylenetetrahydrofolate--tRNA-(uracil-5-)-methyltransferase TrmFO of Heliobacterium modesticaldum (strain ATCC 51547 / Ice1).